Here is a 176-residue protein sequence, read N- to C-terminus: ATP-dependent protease subunit HslV (176 aa).

Thr5 is an active-site residue. Residues Ala161, Cys164, and Thr167 each coordinate Na(+).

The protein belongs to the peptidase T1B family. HslV subfamily. A double ring-shaped homohexamer of HslV is capped on each side by a ring-shaped HslU homohexamer. The assembly of the HslU/HslV complex is dependent on binding of ATP.

The protein localises to the cytoplasm. The enzyme catalyses ATP-dependent cleavage of peptide bonds with broad specificity.. Its activity is regulated as follows. Allosterically activated by HslU binding. Functionally, protease subunit of a proteasome-like degradation complex believed to be a general protein degrading machinery. The sequence is that of ATP-dependent protease subunit HslV from Caldicellulosiruptor bescii (strain ATCC BAA-1888 / DSM 6725 / KCTC 15123 / Z-1320) (Anaerocellum thermophilum).